Reading from the N-terminus, the 255-residue chain is Indole-3-glycerol phosphate synthase (255 aa).

It belongs to the TrpC family.

It carries out the reaction 1-(2-carboxyphenylamino)-1-deoxy-D-ribulose 5-phosphate + H(+) = (1S,2R)-1-C-(indol-3-yl)glycerol 3-phosphate + CO2 + H2O. The protein operates within amino-acid biosynthesis; L-tryptophan biosynthesis; L-tryptophan from chorismate: step 4/5. The sequence is that of Indole-3-glycerol phosphate synthase from Shouchella clausii (strain KSM-K16) (Alkalihalobacillus clausii).